Here is a 261-residue protein sequence, read N- to C-terminus: Cytochrome c oxidase subunit 3 (261 aa).

Over 1 to 15 the chain is Mitochondrial matrix; it reads MAHQSHAYHMVKPSP. A helical membrane pass occupies residues 16-34; that stretch reads WPLTGALSALLTTSGLTMW. At 35 to 40 the chain is on the mitochondrial intermembrane side; the sequence is FHFHST. The helical transmembrane segment at 41 to 66 threads the bilayer; that stretch reads TLLLTGLLTNALTMYQWWRDVVREST. The Mitochondrial matrix segment spans residues 67-72; it reads YQGHHT. Residues 73-105 traverse the membrane as a helical segment; sequence LPVQKGLRYGMILFITSEVFFFAGFFWAFYHSS. The Mitochondrial intermembrane segment spans residues 106–128; that stretch reads LAPTPQLGGHWPPTGIIPLNPLE. A helical membrane pass occupies residues 129 to 152; sequence VPLLNTSVLLASGVSITWAHHSLM. Topologically, residues 153-155 are mitochondrial matrix; the sequence is ENN. Residues 156–183 traverse the membrane as a helical segment; it reads RTQMIQALLITILLGIYFTLLQASEYIE. The Mitochondrial intermembrane segment spans residues 184-190; the sequence is APFTISD. A helical membrane pass occupies residues 191 to 223; it reads GIYGSTFFMATGFHGLHVIIGSTFLTVCLARQL. Residues 224–232 lie on the Mitochondrial matrix side of the membrane; sequence LFHFTSKHH. A helical transmembrane segment spans residues 233 to 256; that stretch reads FGFEAAAWYWHFVDVVWLFLYVSI. At 257 to 261 the chain is on the mitochondrial intermembrane side; it reads YWWGS.

This sequence belongs to the cytochrome c oxidase subunit 3 family. As to quaternary structure, component of the cytochrome c oxidase (complex IV, CIV), a multisubunit enzyme composed of 14 subunits. The complex is composed of a catalytic core of 3 subunits MT-CO1, MT-CO2 and MT-CO3, encoded in the mitochondrial DNA, and 11 supernumerary subunits COX4I, COX5A, COX5B, COX6A, COX6B, COX6C, COX7A, COX7B, COX7C, COX8 and NDUFA4, which are encoded in the nuclear genome. The complex exists as a monomer or a dimer and forms supercomplexes (SCs) in the inner mitochondrial membrane with NADH-ubiquinone oxidoreductase (complex I, CI) and ubiquinol-cytochrome c oxidoreductase (cytochrome b-c1 complex, complex III, CIII), resulting in different assemblies (supercomplex SCI(1)III(2)IV(1) and megacomplex MCI(2)III(2)IV(2)).

Its subcellular location is the mitochondrion inner membrane. The enzyme catalyses 4 Fe(II)-[cytochrome c] + O2 + 8 H(+)(in) = 4 Fe(III)-[cytochrome c] + 2 H2O + 4 H(+)(out). Component of the cytochrome c oxidase, the last enzyme in the mitochondrial electron transport chain which drives oxidative phosphorylation. The respiratory chain contains 3 multisubunit complexes succinate dehydrogenase (complex II, CII), ubiquinol-cytochrome c oxidoreductase (cytochrome b-c1 complex, complex III, CIII) and cytochrome c oxidase (complex IV, CIV), that cooperate to transfer electrons derived from NADH and succinate to molecular oxygen, creating an electrochemical gradient over the inner membrane that drives transmembrane transport and the ATP synthase. Cytochrome c oxidase is the component of the respiratory chain that catalyzes the reduction of oxygen to water. Electrons originating from reduced cytochrome c in the intermembrane space (IMS) are transferred via the dinuclear copper A center (CU(A)) of subunit 2 and heme A of subunit 1 to the active site in subunit 1, a binuclear center (BNC) formed by heme A3 and copper B (CU(B)). The BNC reduces molecular oxygen to 2 water molecules using 4 electrons from cytochrome c in the IMS and 4 protons from the mitochondrial matrix. The sequence is that of Cytochrome c oxidase subunit 3 (MT-CO3) from Pongo abelii (Sumatran orangutan).